The sequence spans 198 residues: Nucleoside triphosphate pyrophosphatase (198 aa).

D70 (proton acceptor) is an active-site residue.

It belongs to the Maf family. A divalent metal cation serves as cofactor.

It localises to the cytoplasm. The catalysed reaction is a ribonucleoside 5'-triphosphate + H2O = a ribonucleoside 5'-phosphate + diphosphate + H(+). The enzyme catalyses a 2'-deoxyribonucleoside 5'-triphosphate + H2O = a 2'-deoxyribonucleoside 5'-phosphate + diphosphate + H(+). In terms of biological role, nucleoside triphosphate pyrophosphatase. May have a dual role in cell division arrest and in preventing the incorporation of modified nucleotides into cellular nucleic acids. This is Nucleoside triphosphate pyrophosphatase from Thermosynechococcus vestitus (strain NIES-2133 / IAM M-273 / BP-1).